A 563-amino-acid chain; its full sequence is Eukaryotic translation initiation factor 3 subunit D (563 aa).

The disordered stretch occupies residues 95–136; it reads PGYMRNRNRFNQRGGYRRDNRGGRFQGQGGNMGMQNLSRGRD. Residues 294-308 are RNA gate; it reads EFDLLTVGETANDLN. Positions 528 to 563 are disordered; sequence IPNSTFETDEEDDDDDEDDVENDDGDDEKDEGDGED. The span at 534–563 shows a compositional bias: acidic residues; that stretch reads ETDEEDDDDDEDDVENDDGDDEKDEGDGED.

It belongs to the eIF-3 subunit D family. As to quaternary structure, component of the eukaryotic translation initiation factor 3 (eIF-3) complex.

Its subcellular location is the cytoplasm. MRNA cap-binding component of the eukaryotic translation initiation factor 3 (eIF-3) complex, which is involved in protein synthesis of a specialized repertoire of mRNAs and, together with other initiation factors, stimulates binding of mRNA and methionyl-tRNAi to the 40S ribosome. The eIF-3 complex specifically targets and initiates translation of a subset of mRNAs involved in cell proliferation. In the eIF-3 complex, eif3d specifically recognizes and binds the 7-methylguanosine cap of a subset of mRNAs. This is Eukaryotic translation initiation factor 3 subunit D from Nematostella vectensis (Starlet sea anemone).